Here is a 379-residue protein sequence, read N- to C-terminus: L-lactate dehydrogenase (379 aa).

Positions 1–379 (MIISSSTDYR…ITSELLVREP (379 aa)) constitute an FMN hydroxy acid dehydrogenase domain. Tyr-24 lines the substrate pocket. Ser-106 and Gln-127 together coordinate FMN. Tyr-129 is a substrate binding site. Residue Thr-155 coordinates FMN. Arg-164 lines the substrate pocket. Lys-251 is an FMN binding site. His-275 (proton acceptor) is an active-site residue. Arg-278 is a binding site for substrate. 306–330 (DSGIRSGLDVVRMIALGADAAMLGR) is an FMN binding site.

It belongs to the FMN-dependent alpha-hydroxy acid dehydrogenase family. Requires FMN as cofactor.

The protein localises to the cell membrane. It carries out the reaction (S)-lactate + A = pyruvate + AH2. Catalyzes the conversion of L-lactate to pyruvate. Is coupled to the respiratory chain. The protein is L-lactate dehydrogenase of Alcaligenes faecalis.